A 252-amino-acid polypeptide reads, in one-letter code: Spermatogenesis-associated protein 9 (252 aa).

Residues 145 to 167 (TSIMYASYAALIYLAVCVNAVLA) form a helical membrane-spanning segment. Residues 208 to 221 (KAKPYRSLPEKPDN) show a composition bias toward basic and acidic residues. Positions 208–235 (KAKPYRSLPEKPDNLLDQPKPPANKQSN) are disordered.

The protein localises to the membrane. Its function is as follows. May play at role in testicular development/spermatogenesis and may be an important factor in male infertility. The chain is Spermatogenesis-associated protein 9 (Spata9) from Mus musculus (Mouse).